We begin with the raw amino-acid sequence, 176 residues long: Phosphopantetheine adenylyltransferase (176 aa).

Serine 8 serves as a coordination point for substrate. Residues 8–9 (SF) and histidine 16 contribute to the ATP site. Lysine 40, threonine 72, and arginine 86 together coordinate substrate. Residues 87–89 (GLR), glutamate 97, and 122–128 (YSFLSSS) each bind ATP.

It belongs to the bacterial CoaD family. Homohexamer. Mg(2+) is required as a cofactor.

The protein localises to the cytoplasm. It carries out the reaction (R)-4'-phosphopantetheine + ATP + H(+) = 3'-dephospho-CoA + diphosphate. Its pathway is cofactor biosynthesis; coenzyme A biosynthesis; CoA from (R)-pantothenate: step 4/5. Reversibly transfers an adenylyl group from ATP to 4'-phosphopantetheine, yielding dephospho-CoA (dPCoA) and pyrophosphate. The sequence is that of Phosphopantetheine adenylyltransferase from Acaryochloris marina (strain MBIC 11017).